Here is a 171-residue protein sequence, read N- to C-terminus: Shikimate kinase (171 aa).

Position 14 to 19 (14 to 19) interacts with ATP; it reads GAGKST. Serine 18 provides a ligand contact to Mg(2+). The substrate site is built by aspartate 36, arginine 60, and glycine 82. An ATP-binding site is contributed by arginine 120. A substrate-binding site is contributed by arginine 139. An ATP-binding site is contributed by glutamine 156.

The protein belongs to the shikimate kinase family. In terms of assembly, monomer. The cofactor is Mg(2+).

The protein localises to the cytoplasm. The enzyme catalyses shikimate + ATP = 3-phosphoshikimate + ADP + H(+). It functions in the pathway metabolic intermediate biosynthesis; chorismate biosynthesis; chorismate from D-erythrose 4-phosphate and phosphoenolpyruvate: step 5/7. Its function is as follows. Catalyzes the specific phosphorylation of the 3-hydroxyl group of shikimic acid using ATP as a cosubstrate. The chain is Shikimate kinase from Shewanella oneidensis (strain ATCC 700550 / JCM 31522 / CIP 106686 / LMG 19005 / NCIMB 14063 / MR-1).